Reading from the N-terminus, the 202-residue chain is MAEEEPKKVTETVSEPTPTPEVPVEKPAAAADVAPQEKPVAPPPVLPSPAPAEEKQEDSKAIVPVVPKEVEEEKKEGSVNRDAVLARVETEKRMSLIKAWEEAEKCKVENKAEKKLSSIGSWENNKKAAVEAELKKMEEQLEKKKAEYVEQMKNKIAQIHKEAEEKRAMIEAKRGEEILKAEELAAKYRATGTAPKKLFGCM.

The segment covering 1–10 (MAEEEPKKVT) has biased composition (basic and acidic residues). The interval 1-79 (MAEEEPKKVT…VEEEKKEGSV (79 aa)) is disordered. Over residues 25–39 (EKPAAAADVAPQEKP) the composition is skewed to low complexity. Residues 40 to 50 (VAPPPVLPSPA) are compositionally biased toward pro residues. The segment covering 68 to 79 (KEVEEEKKEGSV) has biased composition (basic and acidic residues). A coiled-coil region spans residues 123 to 169 (ENNKKAAVEAELKKMEEQLEKKKAEYVEQMKNKIAQIHKEAEEKRAM).

Belongs to the remorin family.

The sequence is that of Remorin 1.4 from Arabidopsis thaliana (Mouse-ear cress).